Reading from the N-terminus, the 369-residue chain is Glutamate 5-kinase (369 aa).

Residue Lys11 participates in ATP binding. Residues Ser51, Asp138, and Asn150 each coordinate substrate. ATP-binding positions include 170 to 171 (TD) and 212 to 218 (TGGMATK). Residues 277-355 (KGSIVIDEGA…QDIYAVLGYE (79 aa)) enclose the PUA domain.

It belongs to the glutamate 5-kinase family.

The protein localises to the cytoplasm. It catalyses the reaction L-glutamate + ATP = L-glutamyl 5-phosphate + ADP. The protein operates within amino-acid biosynthesis; L-proline biosynthesis; L-glutamate 5-semialdehyde from L-glutamate: step 1/2. In terms of biological role, catalyzes the transfer of a phosphate group to glutamate to form L-glutamate 5-phosphate. This is Glutamate 5-kinase from Aliivibrio fischeri (strain ATCC 700601 / ES114) (Vibrio fischeri).